A 180-amino-acid polypeptide reads, in one-letter code: Large ribosomal subunit protein uL6 (180 aa).

This sequence belongs to the universal ribosomal protein uL6 family. As to quaternary structure, part of the 50S ribosomal subunit.

This protein binds to the 23S rRNA, and is important in its secondary structure. It is located near the subunit interface in the base of the L7/L12 stalk, and near the tRNA binding site of the peptidyltransferase center. In Desulforapulum autotrophicum (strain ATCC 43914 / DSM 3382 / VKM B-1955 / HRM2) (Desulfobacterium autotrophicum), this protein is Large ribosomal subunit protein uL6.